The sequence spans 141 residues: ATP synthase epsilon chain (141 aa).

It belongs to the ATPase epsilon chain family. As to quaternary structure, F-type ATPases have 2 components, CF(1) - the catalytic core - and CF(0) - the membrane proton channel. CF(1) has five subunits: alpha(3), beta(3), gamma(1), delta(1), epsilon(1). CF(0) has three main subunits: a, b and c.

Its subcellular location is the cell membrane. Its function is as follows. Produces ATP from ADP in the presence of a proton gradient across the membrane. The protein is ATP synthase epsilon chain of Lactococcus lactis subsp. cremoris (strain SK11).